Here is a 198-residue protein sequence, read N- to C-terminus: GTP cyclohydrolase-2 (198 aa).

R52–E56 contacts GTP. C57, C68, and C70 together coordinate Zn(2+). Residues Q73, E94–R96, and T116 each bind GTP. The active-site Proton acceptor is the D128. Residue R130 is the Nucleophile of the active site. The GTP site is built by T151 and K156.

Belongs to the GTP cyclohydrolase II family. Zn(2+) is required as a cofactor.

It carries out the reaction GTP + 4 H2O = 2,5-diamino-6-hydroxy-4-(5-phosphoribosylamino)-pyrimidine + formate + 2 phosphate + 3 H(+). It functions in the pathway cofactor biosynthesis; riboflavin biosynthesis; 5-amino-6-(D-ribitylamino)uracil from GTP: step 1/4. Catalyzes the conversion of GTP to 2,5-diamino-6-ribosylamino-4(3H)-pyrimidinone 5'-phosphate (DARP), formate and pyrophosphate. In Vibrio parahaemolyticus serotype O3:K6 (strain RIMD 2210633), this protein is GTP cyclohydrolase-2.